The following is a 312-amino-acid chain: Probable N-glycosylase/DNA lyase (312 aa).

The segment at 1–22 (MRIPVGDFDLEMTQRSGQTSQP) is disordered. The span at 13–22 (TQRSGQTSQP) shows a compositional bias: polar residues. Residue K235 is part of the active site.

The protein belongs to the type-1 OGG1 family.

It catalyses the reaction 2'-deoxyribonucleotide-(2'-deoxyribose 5'-phosphate)-2'-deoxyribonucleotide-DNA = a 3'-end 2'-deoxyribonucleotide-(2,3-dehydro-2,3-deoxyribose 5'-phosphate)-DNA + a 5'-end 5'-phospho-2'-deoxyribonucleoside-DNA + H(+). Its function is as follows. DNA repair enzyme that incises DNA at 8-oxoG residues. Excises 7,8-dihydro-8-oxoguanine and 2,6-diamino-4-hydroxy-5-N-methylformamidopyrimidine (FAPY) from damaged DNA. Has a beta-lyase activity that nicks DNA 3' to the lesion. This Methanothermobacter thermautotrophicus (strain ATCC 29096 / DSM 1053 / JCM 10044 / NBRC 100330 / Delta H) (Methanobacterium thermoautotrophicum) protein is Probable N-glycosylase/DNA lyase.